A 341-amino-acid polypeptide reads, in one-letter code: Tryptophan--tRNA ligase (341 aa).

ATP contacts are provided by residues 11–13 and 19–20; these read RPT and GH. Positions 12–20 match the 'HIGH' region motif; it reads PTGKLHIGH. Residue D140 coordinates L-tryptophan. Residues 152–154, L194, and 202–206 contribute to the ATP site; these read GTD and KMSKS. Residues 202–206 carry the 'KMSKS' region motif; that stretch reads KMSKS.

The protein belongs to the class-I aminoacyl-tRNA synthetase family. In terms of assembly, homodimer.

The protein localises to the cytoplasm. The enzyme catalyses tRNA(Trp) + L-tryptophan + ATP = L-tryptophyl-tRNA(Trp) + AMP + diphosphate + H(+). Catalyzes the attachment of tryptophan to tRNA(Trp). The chain is Tryptophan--tRNA ligase from Streptococcus agalactiae serotype III (strain NEM316).